Consider the following 323-residue polypeptide: Beta-ketoacyl-[acyl-carrier-protein] synthase III (323 aa).

Catalysis depends on residues Cys112 and His248. The interval 249–253 is ACP-binding; sequence QANRR. Asn278 is an active-site residue.

This sequence belongs to the thiolase-like superfamily. FabH family. In terms of assembly, homodimer.

Its subcellular location is the cytoplasm. It carries out the reaction malonyl-[ACP] + acetyl-CoA + H(+) = 3-oxobutanoyl-[ACP] + CO2 + CoA. Its pathway is lipid metabolism; fatty acid biosynthesis. Catalyzes the condensation reaction of fatty acid synthesis by the addition to an acyl acceptor of two carbons from malonyl-ACP. Catalyzes the first condensation reaction which initiates fatty acid synthesis and may therefore play a role in governing the total rate of fatty acid production. Possesses both acetoacetyl-ACP synthase and acetyl transacylase activities. Its substrate specificity determines the biosynthesis of branched-chain and/or straight-chain of fatty acids. The protein is Beta-ketoacyl-[acyl-carrier-protein] synthase III of Streptococcus agalactiae serotype Ia (strain ATCC 27591 / A909 / CDC SS700).